The primary structure comprises 485 residues: ATP synthase subunit beta (485 aa).

A compositionally biased stretch (basic and acidic residues) spans 1–11 (MPATETADKNT). The disordered stretch occupies residues 1–20 (MPATETADKNTKSANSDTSG). 170-177 (GGAGVGKT) contacts ATP.

This sequence belongs to the ATPase alpha/beta chains family. F-type ATPases have 2 components, CF(1) - the catalytic core - and CF(0) - the membrane proton channel. CF(1) has five subunits: alpha(3), beta(3), gamma(1), delta(1), epsilon(1). CF(0) has three main subunits: a(1), b(2) and c(9-12). The alpha and beta chains form an alternating ring which encloses part of the gamma chain. CF(1) is attached to CF(0) by a central stalk formed by the gamma and epsilon chains, while a peripheral stalk is formed by the delta and b chains.

The protein localises to the cell membrane. It carries out the reaction ATP + H2O + 4 H(+)(in) = ADP + phosphate + 5 H(+)(out). Functionally, produces ATP from ADP in the presence of a proton gradient across the membrane. The catalytic sites are hosted primarily by the beta subunits. This chain is ATP synthase subunit beta, found in Mycobacterium avium (strain 104).